Consider the following 276-residue polypeptide: MSSTVELASSFIEGAPPGEALTSDGSDIIPSLAPAFERYNEKQLTTVKLPGASQEVIVSEFNKIEGNRYFDVESQTSFGVDHVTQQASGAQSYVLESQNADLIHVEVHSRSNQCSKSLLKSLAKHAAEHYPNCSYGVYPTEDDTAVAILLVANRYSPNNFWNGRFRSIYRVPVSESTTVSGKILVDVHYYEDGNVALNTNKPINIAIPSISAESIISRIAAAERDYQEELNRAFVQMAEGAFKNLRRQLPITRQKVEWEKVGGYRLGQDISGGKGR.

This sequence belongs to the F-actin-capping protein alpha subunit family. In terms of assembly, heterodimer of an alpha and a beta subunit.

Its subcellular location is the cytoplasm. The protein localises to the cytoskeleton. F-actin-capping proteins bind in a Ca(2+)-independent manner to the fast growing ends of actin filaments (barbed end) thereby blocking the exchange of subunits at these ends. Unlike other capping proteins (such as gelsolin and severin), these proteins do not sever actin filaments. The chain is F-actin-capping protein subunit alpha (cap1) from Aspergillus fumigatus (strain ATCC MYA-4609 / CBS 101355 / FGSC A1100 / Af293) (Neosartorya fumigata).